The sequence spans 352 residues: NAD(P)H oxidoreductase RTN4IP1, mitochondrial (352 aa).

Residues 11–348 form the Enoyl reductase (ER) domain; the sequence is ESLDLLEYKT…NSNSNGKIII (338 aa). The NADPH site is built by Val165, Tyr206, Ala296, and Phe298.

It belongs to the zinc-containing alcohol dehydrogenase family. Quinone oxidoreductase subfamily.

It localises to the mitochondrion matrix. The catalysed reaction is a quinone + NADH + H(+) = a quinol + NAD(+). The enzyme catalyses a quinone + NADPH + H(+) = a quinol + NADP(+). It functions in the pathway cofactor biosynthesis; ubiquinone biosynthesis. In terms of biological role, NAD(P)H oxidoreductase involved in the ubiquinone biosynthetic pathway. Required for the O-methyltransferase activity of coq3. The chain is NAD(P)H oxidoreductase RTN4IP1, mitochondrial (rtn4ip1) from Dictyostelium discoideum (Social amoeba).